Reading from the N-terminus, the 469-residue chain is Probable Xaa-Pro aminopeptidase PEPP (469 aa).

Mn(2+) contacts are provided by D265, D276, E399, and E439.

The protein belongs to the peptidase M24B family. The cofactor is Mn(2+).

It carries out the reaction Release of any N-terminal amino acid, including proline, that is linked to proline, even from a dipeptide or tripeptide.. Catalyzes the removal of a penultimate prolyl residue from the N-termini of peptides. This chain is Probable Xaa-Pro aminopeptidase PEPP (PEPP), found in Coccidioides posadasii (strain RMSCC 757 / Silveira) (Valley fever fungus).